A 199-amino-acid chain; its full sequence is ATP-dependent Clp protease proteolytic subunit (199 aa).

Ser-99 (nucleophile) is an active-site residue. His-124 is an active-site residue.

This sequence belongs to the peptidase S14 family. Fourteen ClpP subunits assemble into 2 heptameric rings which stack back to back to give a disk-like structure with a central cavity, resembling the structure of eukaryotic proteasomes.

It localises to the cytoplasm. It carries out the reaction Hydrolysis of proteins to small peptides in the presence of ATP and magnesium. alpha-casein is the usual test substrate. In the absence of ATP, only oligopeptides shorter than five residues are hydrolyzed (such as succinyl-Leu-Tyr-|-NHMec, and Leu-Tyr-Leu-|-Tyr-Trp, in which cleavage of the -Tyr-|-Leu- and -Tyr-|-Trp bonds also occurs).. Its function is as follows. Cleaves peptides in various proteins in a process that requires ATP hydrolysis. Has a chymotrypsin-like activity. Plays a major role in the degradation of misfolded proteins. The protein is ATP-dependent Clp protease proteolytic subunit of Lactococcus lactis subsp. cremoris (strain SK11).